The primary structure comprises 200 residues: Dephospho-CoA kinase (200 aa).

Residues 4 to 200 (VIGLTGGIAS…AILKKWNIID (197 aa)) enclose the DPCK domain. 12–17 (ASGKST) lines the ATP pocket.

It belongs to the CoaE family.

The protein localises to the cytoplasm. The catalysed reaction is 3'-dephospho-CoA + ATP = ADP + CoA + H(+). It functions in the pathway cofactor biosynthesis; coenzyme A biosynthesis; CoA from (R)-pantothenate: step 5/5. Catalyzes the phosphorylation of the 3'-hydroxyl group of dephosphocoenzyme A to form coenzyme A. The chain is Dephospho-CoA kinase from Bacillus thuringiensis subsp. konkukian (strain 97-27).